The chain runs to 131 residues: Small ribosomal subunit protein uS8 (131 aa).

It belongs to the universal ribosomal protein uS8 family. As to quaternary structure, part of the 30S ribosomal subunit. Contacts proteins S5 and S12.

One of the primary rRNA binding proteins, it binds directly to 16S rRNA central domain where it helps coordinate assembly of the platform of the 30S subunit. This Halorhodospira halophila (strain DSM 244 / SL1) (Ectothiorhodospira halophila (strain DSM 244 / SL1)) protein is Small ribosomal subunit protein uS8.